The chain runs to 123 residues: Large ribosomal subunit protein bL12 (123 aa).

Belongs to the bacterial ribosomal protein bL12 family. In terms of assembly, homodimer. Part of the ribosomal stalk of the 50S ribosomal subunit. Forms a multimeric L10(L12)X complex, where L10 forms an elongated spine to which 2 to 4 L12 dimers bind in a sequential fashion. Binds GTP-bound translation factors.

Forms part of the ribosomal stalk which helps the ribosome interact with GTP-bound translation factors. Is thus essential for accurate translation. This Salmonella arizonae (strain ATCC BAA-731 / CDC346-86 / RSK2980) protein is Large ribosomal subunit protein bL12.